We begin with the raw amino-acid sequence, 163 residues long: Neurotrophin-3 (163 aa).

An N-terminal signal peptide occupies residues 1–3; the sequence is IQS. The propeptide occupies 4-119; it reads TSMDQGILTE…VLNRTSRRKR (116 aa). An N-linked (GlcNAc...) asparagine glycan is attached at N112.

It belongs to the NGF-beta family.

The protein localises to the secreted. Seems to promote the survival of visceral and proprioceptive sensory neurons. This Chilabothrus striatus (Haitian boa constrictor) protein is Neurotrophin-3 (NTF3).